Consider the following 236-residue polypeptide: Geranylgeranylglyceryl phosphate synthase (236 aa).

Lys13 contacts sn-glycerol 1-phosphate. Positions 15 and 42 each coordinate Mg(2+). Sn-glycerol 1-phosphate-binding positions include 161 to 166, Gly191, and 211 to 212; these read YVEYSG and GD.

This sequence belongs to the GGGP/HepGP synthase family. Group I subfamily. Requires Mg(2+) as cofactor.

The protein localises to the cytoplasm. The enzyme catalyses sn-glycerol 1-phosphate + (2E,6E,10E)-geranylgeranyl diphosphate = sn-3-O-(geranylgeranyl)glycerol 1-phosphate + diphosphate. It participates in membrane lipid metabolism; glycerophospholipid metabolism. Prenyltransferase that catalyzes the transfer of the geranylgeranyl moiety of geranylgeranyl diphosphate (GGPP) to the C3 hydroxyl of sn-glycerol-1-phosphate (G1P). This reaction is the first ether-bond-formation step in the biosynthesis of archaeal membrane lipids. The protein is Geranylgeranylglyceryl phosphate synthase of Halobacterium salinarum (strain ATCC 700922 / JCM 11081 / NRC-1) (Halobacterium halobium).